The chain runs to 356 residues: UDP-N-acetylglucosamine--N-acetylmuramyl-(pentapeptide) pyrophosphoryl-undecaprenol N-acetylglucosamine transferase (356 aa).

Arg166, Ser196, and Gln290 together coordinate UDP-N-acetyl-alpha-D-glucosamine.

The protein belongs to the glycosyltransferase 28 family. MurG subfamily.

It localises to the cell membrane. The enzyme catalyses Mur2Ac(oyl-L-Ala-gamma-D-Glu-L-Lys-D-Ala-D-Ala)-di-trans,octa-cis-undecaprenyl diphosphate + UDP-N-acetyl-alpha-D-glucosamine = beta-D-GlcNAc-(1-&gt;4)-Mur2Ac(oyl-L-Ala-gamma-D-Glu-L-Lys-D-Ala-D-Ala)-di-trans,octa-cis-undecaprenyl diphosphate + UDP + H(+). It functions in the pathway cell wall biogenesis; peptidoglycan biosynthesis. In terms of biological role, cell wall formation. Catalyzes the transfer of a GlcNAc subunit on undecaprenyl-pyrophosphoryl-MurNAc-pentapeptide (lipid intermediate I) to form undecaprenyl-pyrophosphoryl-MurNAc-(pentapeptide)GlcNAc (lipid intermediate II). This Staphylococcus aureus (strain MW2) protein is UDP-N-acetylglucosamine--N-acetylmuramyl-(pentapeptide) pyrophosphoryl-undecaprenol N-acetylglucosamine transferase.